The following is a 611-amino-acid chain: Leucine aminopeptidase (611 aa).

Residues 129–131 (QCQ) and 278–282 (GGMEN) each bind substrate. His-305 is a binding site for Zn(2+). Catalysis depends on Glu-306, which acts as the Proton acceptor. Residues His-309 and Glu-328 each coordinate Zn(2+). The active-site Proton donor is the Tyr-393. Residue 562–564 (RMK) coordinates substrate.

Belongs to the peptidase M1 family. Zn(2+) is required as a cofactor.

The protein localises to the cytoplasm. It carries out the reaction an epoxide + H2O = an ethanediol. Its function is as follows. Aminopeptidase that preferentially cleaves di- and tripeptides. Also has low epoxide hydrolase activity (in vitro). Can hydrolyze the epoxide leukotriene LTA(4) but it forms preferentially 5,6-dihydroxy-7,9,11,14-eicosatetraenoic acid rather than the cytokine leukotriene B(4) as the product compared to the homologous mammalian enzyme (in vitro). The chain is Leucine aminopeptidase (LKHA4) from Oryza sativa subsp. japonica (Rice).